We begin with the raw amino-acid sequence, 67 residues long: Large ribosomal subunit protein uL29 (67 aa).

The protein belongs to the universal ribosomal protein uL29 family.

In Wolbachia sp. subsp. Drosophila simulans (strain wRi), this protein is Large ribosomal subunit protein uL29.